A 419-amino-acid polypeptide reads, in one-letter code: L-rhamnose isomerase (419 aa).

Mn(2+) contacts are provided by His-262, Asp-294, and Asp-296.

Belongs to the rhamnose isomerase family. In terms of assembly, homotetramer. It depends on Mn(2+) as a cofactor.

Its subcellular location is the cytoplasm. It carries out the reaction L-rhamnopyranose = L-rhamnulose. It functions in the pathway carbohydrate degradation; L-rhamnose degradation; glycerone phosphate from L-rhamnose: step 1/3. Its function is as follows. Catalyzes the interconversion of L-rhamnose and L-rhamnulose. In Salmonella choleraesuis (strain SC-B67), this protein is L-rhamnose isomerase.